Here is a 409-residue protein sequence, read N- to C-terminus: DNA primase small subunit (409 aa).

Active-site residues include glutamate 46, aspartate 111, and aspartate 113. Positions 123–133 (CCSGAQVCSKC) match the Zinc knuckle motif motif.

The protein belongs to the eukaryotic-type primase small subunit family. As to quaternary structure, DNA polymerase alpha:primase is a four subunit enzyme complex, which is assembled throughout the cell cycle, and consists of the two DNA polymerase subunits A POL1 and B POL12, and the DNA primase large PRI2 and small PRI1 subunits.

DNA primase is the polymerase that synthesizes small RNA primers for the Okazaki fragments made during discontinuous DNA replication. In a complex with DNA polymerase alpha (DNA polymerase alpha:primase) constitutes a replicative polymerase. Both primase components participate in formation of the active center, but the ATP-binding site is exclusively located on p48. The chain is DNA primase small subunit (PRI1) from Saccharomyces cerevisiae (strain ATCC 204508 / S288c) (Baker's yeast).